A 596-amino-acid chain; its full sequence is Selenocysteine-specific elongation factor (596 aa).

The tr-type G domain occupies 5-217 (RVNVNVGVLG…LLTSQISIPT (213 aa)). The tract at residues 14–21 (GHIDSGKT) is G1. 3 residues coordinate GDP: Gly19, Thr21, and Ala22. Positions 19, 21, and 22 each coordinate GTP. Thr21 lines the Mg(2+) pocket. A G2 region spans residues 46 to 50 (GITLD). Residues Thr48 and Asp92 each contribute to the Mg(2+) site. The interval 92–95 (DCPG) is G3. The segment at 146-149 (NKID) is G4. Residues Asp149 and Lys187 each contribute to the GDP site. GTP is bound by residues Asp149 and Lys187. Residues 185 to 187 (AAK) are G5. At Ser537 the chain carries Phosphoserine. Thr545 carries the post-translational modification Phosphothreonine. A Nuclear localization signal motif is present at residues 547 to 553 (ALKKRAR). Residues 548–573 (LKKRARAGRGEATRQEESAERSEPSQ) are disordered. Residues 555–571 (GRGEATRQEESAERSEP) are compositionally biased toward basic and acidic residues. At Arg556 the chain carries Omega-N-methylarginine.

The protein belongs to the TRAFAC class translation factor GTPase superfamily. Classic translation factor GTPase family. SelB subfamily. Requires Mg(2+) as cofactor. Mn(2+) is required as a cofactor.

It localises to the cytoplasm. Its subcellular location is the nucleus. The enzyme catalyses GTP + H2O = GDP + phosphate + H(+). Its function is as follows. Translation factor required for the incorporation of the rare amino acid selenocysteine encoded by UGA codons. Replaces the eRF1-eRF3-GTP ternary complex for the insertion of selenocysteine directed by the UGA codon. Insertion of selenocysteine at UGA codons is mediated by SECISBP2 and EEFSEC: SECISBP2 (1) specifically binds the SECIS sequence once the 80S ribosome encounters an in-frame UGA codon and (2) contacts the RPS27A/eS31 of the 40S ribosome before ribosome stalling. (3) GTP-bound EEFSEC then delivers selenocysteinyl-tRNA(Sec) to the 80S ribosome and adopts a preaccommodated state conformation. (4) After GTP hydrolysis, EEFSEC dissociates from the assembly, selenocysteinyl-tRNA(Sec) accommodates, and peptide bond synthesis and selenoprotein elongation occur. The protein is Selenocysteine-specific elongation factor of Homo sapiens (Human).